The sequence spans 459 residues: Cysteine--tRNA ligase (459 aa).

Cys28 is a Zn(2+) binding site. Residues 30-40 carry the 'HIGH' region motif; that stretch reads VTVYDLCHIGH. Zn(2+)-binding residues include Cys209, His234, and Glu238. The 'KMSKS' region motif lies at 266 to 270; that stretch reads KMSKS. Lys269 provides a ligand contact to ATP.

The protein belongs to the class-I aminoacyl-tRNA synthetase family. Monomer. It depends on Zn(2+) as a cofactor.

It localises to the cytoplasm. It catalyses the reaction tRNA(Cys) + L-cysteine + ATP = L-cysteinyl-tRNA(Cys) + AMP + diphosphate. This is Cysteine--tRNA ligase from Haemophilus influenzae (strain 86-028NP).